A 306-amino-acid polypeptide reads, in one-letter code: Protease HtpX homolog (306 aa).

Transmembrane regions (helical) follow at residues threonine 10–glycine 30 and glutamine 33–serine 53. Residue histidine 135 participates in Zn(2+) binding. Glutamate 136 is an active-site residue. Histidine 139 contributes to the Zn(2+) binding site. The next 2 membrane-spanning stretches (helical) occupy residues alanine 149–glycine 169 and glycine 181–isoleucine 201. Glutamate 210 serves as a coordination point for Zn(2+).

Belongs to the peptidase M48B family. Zn(2+) is required as a cofactor.

The protein resides in the cell membrane. The sequence is that of Protease HtpX homolog from Bifidobacterium longum (strain NCC 2705).